Reading from the N-terminus, the 207-residue chain is GILT-like protein 2 (207 aa).

Residues 1 to 19 form the signal peptide; the sequence is MRAAVFVCLLLGWVGVATP. Cysteine 40 and cysteine 43 are disulfide-bonded. N-linked (GlcNAc...) asparagine glycosylation is present at asparagine 182.

The protein belongs to the GILT family.

It is found in the secreted. Functionally, probable lysosomal thiol reductase that can reduce protein disulfide bonds. Involved in the immune response to bacterial infection. This Drosophila melanogaster (Fruit fly) protein is GILT-like protein 2.